Here is a 360-residue protein sequence, read N- to C-terminus: Peptide chain release factor 1 (360 aa).

Position 235 is an N5-methylglutamine (Gln-235). Over residues 284–293 (QRRQQEESST) the composition is skewed to basic and acidic residues. The segment at 284 to 311 (QRRQQEESSTRRNLLGSGDRSDRIRTYN) is disordered.

It belongs to the prokaryotic/mitochondrial release factor family. Post-translationally, methylated by PrmC. Methylation increases the termination efficiency of RF1.

It is found in the cytoplasm. Peptide chain release factor 1 directs the termination of translation in response to the peptide chain termination codons UAG and UAA. This is Peptide chain release factor 1 from Sodalis glossinidius (strain morsitans).